Consider the following 278-residue polypeptide: Aquaporin NIP3-3 (278 aa).

2 helical membrane passes run 70-90 (VSAEFFGTFILIFTVLSTIIM) and 99-119 (TLLGIATSAGLAVTVLVLSLI). The NPA 1 motif lies at 127–129 (NPA). 3 helical membrane passes run 141-163 (PSAHLLPYISSQILGAVAASFAV), 185-205 (AFFVEFIITFFLLFIITALAT), and 213-233 (LIAVAVGATVMMNILVAGPST). An NPA 2 motif is present at residues 238-240 (NPA). The chain crosses the membrane as a helical span at residues 255-275 (IWVYLVATPLGAIAGTGAYVA).

It belongs to the MIP/aquaporin (TC 1.A.8) family. NIP (TC 1.A.8.12) subfamily. Expressed in leaves and at lower levels in roots and anthers.

The protein localises to the membrane. Its function is as follows. Aquaporins facilitate the transport of water and small neutral solutes across cell membranes. This chain is Aquaporin NIP3-3 (NIP3-3), found in Oryza sativa subsp. japonica (Rice).